The primary structure comprises 694 residues: GRB2-associated-binding protein 1 (694 aa).

An N-acetylserine modification is found at Ser2. Residues Glu5–Gly116 enclose the PH domain. Disordered stretches follow at residues Glu122–Leu164 and Pro194–Gly231. Over residues Ala145–Thr157 the composition is skewed to polar residues. The segment covering Pro194 to Ser203 has biased composition (basic and acidic residues). Residues Ala204–Gly231 show a composition bias toward polar residues. Residues Ser251, Ser253, Ser266, and Ser304 each carry the phosphoserine modification. A disordered region spans residues Phe323–Asn386. A compositionally biased stretch (polar residues) spans Ile362 to Asn386. Thr387 is modified (phosphothreonine). Ser402 and Ser454 each carry phosphoserine. Disordered regions lie at residues Ala493–Ala532 and Glu544–Arg656. Ala547 carries the post-translational modification Phosphoserine. The span at Pro594–Gly611 shows a compositional bias: polar residues. Phosphotyrosine is present on Tyr627. Phosphothreonine is present on Thr638. Ser651 is modified (phosphoserine). Phosphotyrosine is present on Tyr659. The interval Lys671–Lys694 is disordered. Basic and acidic residues predominate over residues Ser672–Thr684. Phosphoserine is present on Ser683. Over residues Glu685–Lys694 the composition is skewed to polar residues.

The protein belongs to the GAB family. As to quaternary structure, identified in a complex containing FRS2, GRB2, GAB1, PIK3R1 and SOS1. Forms a tripartite complex containing GAB1, METTL13 and SPRY2. Within the complex interacts with METTL13. Interacts with GRB2 and with other SH2-containing proteins. Interacts with phosphorylated LAT2. Interacts with PTPRJ. Interacts (phosphorylated) with PTPN11. Interacts with HCK. Phosphorylated in response to FGFR1 activation. Phosphorylated on tyrosine residue(s) by the epidermal growth factor receptor (EGFR) and the insulin receptor (INSR). Tyrosine phosphorylation of GAB1 mediates interaction with several proteins that contain SH2 domains. Phosphorylated on tyrosine residues by HCK upon IL6 signaling.

Functionally, adapter protein that plays a role in intracellular signaling cascades triggered by activated receptor-type kinases. Plays a role in FGFR1 signaling. Probably involved in signaling by the epidermal growth factor receptor (EGFR) and the insulin receptor (INSR). Involved in the MET/HGF-signaling pathway. The polypeptide is GRB2-associated-binding protein 1 (GAB1) (Homo sapiens (Human)).